Here is a 394-residue protein sequence, read N- to C-terminus: Ribulose bisphosphate carboxylase large chain (394 aa).

N6,N6,N6-trimethyllysine is present on Lys5. Positions 114 and 164 each coordinate substrate. Catalysis depends on Lys166, which acts as the Proton acceptor. A substrate-binding site is contributed by Lys168. Residues Lys192, Asp194, and Glu195 each coordinate Mg(2+). An N6-carboxylysine modification is found at Lys192. The Proton acceptor role is filled by His285. Residues Arg286, His318, and Ser370 each coordinate substrate.

Belongs to the RuBisCO large chain family. Type I subfamily. Heterohexadecamer of 8 large chains and 8 small chains; disulfide-linked. The disulfide link is formed within the large subunit homodimers. Mg(2+) is required as a cofactor. Post-translationally, the disulfide bond which can form in the large chain dimeric partners within the hexadecamer appears to be associated with oxidative stress and protein turnover.

The protein localises to the plastid. It localises to the chloroplast. The enzyme catalyses 2 (2R)-3-phosphoglycerate + 2 H(+) = D-ribulose 1,5-bisphosphate + CO2 + H2O. It carries out the reaction D-ribulose 1,5-bisphosphate + O2 = 2-phosphoglycolate + (2R)-3-phosphoglycerate + 2 H(+). In terms of biological role, ruBisCO catalyzes two reactions: the carboxylation of D-ribulose 1,5-bisphosphate, the primary event in carbon dioxide fixation, as well as the oxidative fragmentation of the pentose substrate in the photorespiration process. Both reactions occur simultaneously and in competition at the same active site. This is Ribulose bisphosphate carboxylase large chain (rbcL) from Nelumbo lutea (American lotus).